A 239-amino-acid polypeptide reads, in one-letter code: Purine nucleoside phosphorylase DeoD-type (239 aa).

Position 5 (His-5) interacts with a purine D-ribonucleoside. Residues Gly-21, Arg-25, Arg-44, and 88–91 contribute to the phosphate site; that span reads RVGS. Residues 180 to 182 and 204 to 205 each bind a purine D-ribonucleoside; these read EME and SD. Asp-205 (proton donor) is an active-site residue.

Belongs to the PNP/UDP phosphorylase family. As to quaternary structure, homohexamer; trimer of homodimers.

The enzyme catalyses a purine D-ribonucleoside + phosphate = a purine nucleobase + alpha-D-ribose 1-phosphate. It carries out the reaction a purine 2'-deoxy-D-ribonucleoside + phosphate = a purine nucleobase + 2-deoxy-alpha-D-ribose 1-phosphate. In terms of biological role, catalyzes the reversible phosphorolytic breakdown of the N-glycosidic bond in the beta-(deoxy)ribonucleoside molecules, with the formation of the corresponding free purine bases and pentose-1-phosphate. This chain is Purine nucleoside phosphorylase DeoD-type, found in Salmonella gallinarum (strain 287/91 / NCTC 13346).